A 309-amino-acid polypeptide reads, in one-letter code: Dehydrogenase/reductase SDR family member 7B (309 aa).

The Cytoplasmic portion of the chain corresponds to 1–4; the sequence is MDLT. The helical; Signal-anchor for type II membrane protein transmembrane segment at 5 to 25 threads the bilayer; sequence TWAIFPLLLGSIGVYSLYKLL. Residues 26 to 272 are Lumenal-facing; sequence QRLRSGAYLQ…AVGERRKELL (247 aa). NAD(+)-binding residues include Ser-46 and Leu-48. Residue Ser-178 participates in substrate binding. NAD(+)-binding residues include Tyr-191, Lys-195, and Thr-226. Tyr-191 acts as the Proton acceptor in catalysis.

The protein belongs to the short-chain dehydrogenases/reductases (SDR) family.

The protein localises to the endoplasmic reticulum membrane. Functionally, putative oxidoreductase. In Xenopus tropicalis (Western clawed frog), this protein is Dehydrogenase/reductase SDR family member 7B (dhrs7b).